The sequence spans 331 residues: Beta-ketoacyl-[acyl-carrier-protein] synthase III (331 aa).

Active-site residues include cysteine 116 and histidine 256. The interval 257–261 (QANTR) is ACP-binding. Residue asparagine 286 is part of the active site.

The protein belongs to the thiolase-like superfamily. FabH family. Homodimer.

Its subcellular location is the cytoplasm. It catalyses the reaction malonyl-[ACP] + acetyl-CoA + H(+) = 3-oxobutanoyl-[ACP] + CO2 + CoA. It functions in the pathway lipid metabolism; fatty acid biosynthesis. Its function is as follows. Catalyzes the condensation reaction of fatty acid synthesis by the addition to an acyl acceptor of two carbons from malonyl-ACP. Catalyzes the first condensation reaction which initiates fatty acid synthesis and may therefore play a role in governing the total rate of fatty acid production. Possesses both acetoacetyl-ACP synthase and acetyl transacylase activities. Its substrate specificity determines the biosynthesis of branched-chain and/or straight-chain of fatty acids. The polypeptide is Beta-ketoacyl-[acyl-carrier-protein] synthase III (Caldanaerobacter subterraneus subsp. tengcongensis (strain DSM 15242 / JCM 11007 / NBRC 100824 / MB4) (Thermoanaerobacter tengcongensis)).